Reading from the N-terminus, the 196-residue chain is Dephospho-CoA kinase (196 aa).

Residues 5–196 enclose the DPCK domain; the sequence is IIGLTGGIAT…QVDIALNFEL (192 aa). Residue 13-18 coordinates ATP; it reads ATGKTT.

Belongs to the CoaE family.

The protein resides in the cytoplasm. The enzyme catalyses 3'-dephospho-CoA + ATP = ADP + CoA + H(+). Its pathway is cofactor biosynthesis; coenzyme A biosynthesis; CoA from (R)-pantothenate: step 5/5. Catalyzes the phosphorylation of the 3'-hydroxyl group of dephosphocoenzyme A to form coenzyme A. This chain is Dephospho-CoA kinase, found in Nostoc sp. (strain PCC 7120 / SAG 25.82 / UTEX 2576).